The sequence spans 353 residues: MVDTHKLADDVLQLLDNRIEDNYRVCVILVGSPGSGKSTIAEELCQIINEKYHTFLSEHPNVIEVNDRLKPMVNLVDSLKTLQPNKVAEMIENQGLFKDHVEDVNFQPVKYSALTSNNEECTAVVARGGTANAIRIAAVDNPVNVNKLAQDSINIAQIVPMDGFHLSRRCLDLFKDPQTAHKRRGSPSTFDSNNFLQLCKILAKTSLCKVSSHHKFYSTSSVFEKLSKTFSQTIPDIFVPGFNHALKDPTPDQYCISKFTRIVILEGLYLLYDQENWKKIYKTLADTGALLVYKIDIDYEATEERVAKRHLQSGLVTTIAEGREKFRSNDLLNGRDIDNHLIKVDNIVHIRND.

Glycine 31–threonine 39 lines the ATP pocket.

It belongs to the YFH7 family.

Functionally, ATP-dependent kinase that could be involved in endoplasmic reticulum membrane assembly. This chain is ATP-dependent kinase YFH7 (YFH7), found in Saccharomyces cerevisiae (strain ATCC 204508 / S288c) (Baker's yeast).